The chain runs to 297 residues: 4-hydroxy-tetrahydrodipicolinate synthase (297 aa).

Thr-47 contacts pyruvate. Tyr-135 functions as the Proton donor/acceptor in the catalytic mechanism. Catalysis depends on Lys-163, which acts as the Schiff-base intermediate with substrate. Ile-205 contributes to the pyruvate binding site.

The protein belongs to the DapA family. In terms of assembly, homotetramer; dimer of dimers.

It is found in the cytoplasm. It catalyses the reaction L-aspartate 4-semialdehyde + pyruvate = (2S,4S)-4-hydroxy-2,3,4,5-tetrahydrodipicolinate + H2O + H(+). Its pathway is amino-acid biosynthesis; L-lysine biosynthesis via DAP pathway; (S)-tetrahydrodipicolinate from L-aspartate: step 3/4. Its function is as follows. Catalyzes the condensation of (S)-aspartate-beta-semialdehyde [(S)-ASA] and pyruvate to 4-hydroxy-tetrahydrodipicolinate (HTPA). This Dehalococcoides mccartyi (strain ATCC BAA-2100 / JCM 16839 / KCTC 5957 / BAV1) protein is 4-hydroxy-tetrahydrodipicolinate synthase.